A 235-amino-acid polypeptide reads, in one-letter code: Retron Ec48 transmembrane protein (235 aa).

Helical transmembrane passes span 11 to 31 (IVGV…FETI) and 64 to 84 (AFGW…ALMT).

It is found in the cell inner membrane. In terms of biological role, membrane component of antiviral defense system Retron Ec48, composed of a non-coding RNA (ncRNA), a reverse transcriptase (RT) and this membrane protein. Expression of this retron confers protection against bacteriophages lambda, T2, T4, T5 and T7. At multiplicity of infection (MOI) of 0.02 cultures grow normally when infected with lambda without collapsing, at MOI 2 cultures enter growth stasis. At MOI 3 cell membranes are permeabilized within 15 minutes of infection but do not lyse, suggesting the phage are not able to finish a replication cycle. Antiviral defense is suppressed by mutations that knockout the lambda gam expression or phage T7 gp5.9 expression; both viral genes inhibit host RecBCD. The Ec48 retron may sense the integrity of the RecBCD enzyme; when RecBCD is perturbed by viral proteins the Ec48 effector (the membrane protein) is activated, leading to abortive infection and bacterial growth arrest. This Escherichia coli protein is Retron Ec48 transmembrane protein.